A 450-amino-acid polypeptide reads, in one-letter code: MSSLDVEEVIETIEMIRMRNLDVRAVTLGINLLDRAHPDPEELARDVREKIVEVAGDLVEVVEEVEDELGVPIVNKRIAVTPCSIVAASAVRKEGREAVLTLAEALDEAAEEVGVDYLGGYTALVYDGFTEADEAVLDTIPEAIEGTERLCASVVVADERYGINMDAVYRTAEAVKETAERTDGHGCARLVALTNAPENTPFMAGAFHGVGQPEACVNVGISGPGVVRAVVEELKDVDFRTLHDEIKRTAFKITRVGELVGRRVAERLGVEFGAVDLSLAPTPEEGDSVAEILEGIGLESCGCPGSTAALHLLMDAVKKGGAAATSRHGGYSEAFIPVSEDAGMARAAEEALTLEKLEAMTAVCSVGIDMVVVPGDTPVETIAGIIADEAAIGVVTGKPTAVRIIPAPGKEPGDEFEMGGLLGRAPVMDVSDYRPTMFRRDGRIPPKFPR.

This sequence belongs to the UPF0210 family.

The sequence is that of UPF0210 protein MK1214 from Methanopyrus kandleri (strain AV19 / DSM 6324 / JCM 9639 / NBRC 100938).